The primary structure comprises 807 residues: uncharacterized protein (807 aa).

Belongs to the IIV-6 155L family.

This is an uncharacterized protein from Aedes vexans (Inland floodwater mosquito).